A 378-amino-acid chain; its full sequence is Biotin synthase, mitochondrial (378 aa).

The N-terminal 26 residues, 1-26 (MMLVRSVFRSQLRPSVSGGLQSASCY), are a transit peptide targeting the mitochondrion. One can recognise a Radical SAM core domain in the interval 79–308 (REVQQCTLLS…KAMVRLSAGR (230 aa)). Positions 94, 98, and 101 each coordinate [4Fe-4S] cluster. [2Fe-2S] cluster is bound by residues C138, C171, C231, and R303. The interval 357 to 378 (PPSFSEDDSESENCEKVASASH) is disordered.

Belongs to the radical SAM superfamily. Biotin synthase family. [4Fe-4S] cluster serves as cofactor. The cofactor is [2Fe-2S] cluster.

Its subcellular location is the mitochondrion. The enzyme catalyses (4R,5S)-dethiobiotin + (sulfur carrier)-SH + 2 reduced [2Fe-2S]-[ferredoxin] + 2 S-adenosyl-L-methionine = (sulfur carrier)-H + biotin + 2 5'-deoxyadenosine + 2 L-methionine + 2 oxidized [2Fe-2S]-[ferredoxin]. It functions in the pathway cofactor biosynthesis; biotin biosynthesis; biotin from 7,8-diaminononanoate: step 2/2. In Arabidopsis thaliana (Mouse-ear cress), this protein is Biotin synthase, mitochondrial (BIO2).